A 679-amino-acid polypeptide reads, in one-letter code: Methionine--tRNA ligase (679 aa).

The 'HIGH' region signature appears at 15–25; that stretch reads PYANGPIHLGH. 4 residues coordinate Zn(2+): C146, C149, C159, and C162. The short motif at 332–336 is the 'KMSKS' region element; sequence KMSKS. K335 contributes to the ATP binding site. The region spanning 578 to 679 is the tRNA-binding domain; sequence DFAKIDLRIA…EGAQPGMKVK (102 aa).

Belongs to the class-I aminoacyl-tRNA synthetase family. MetG type 1 subfamily. As to quaternary structure, homodimer. It depends on Zn(2+) as a cofactor.

The protein resides in the cytoplasm. It catalyses the reaction tRNA(Met) + L-methionine + ATP = L-methionyl-tRNA(Met) + AMP + diphosphate. In terms of biological role, is required not only for elongation of protein synthesis but also for the initiation of all mRNA translation through initiator tRNA(fMet) aminoacylation. The polypeptide is Methionine--tRNA ligase (Shewanella pealeana (strain ATCC 700345 / ANG-SQ1)).